A 267-amino-acid polypeptide reads, in one-letter code: Thiamine pyrophosphokinase 3 (267 aa).

Belongs to the thiamine pyrophosphokinase family.

Its subcellular location is the cytoplasm. The protein resides in the cytosol. The enzyme catalyses thiamine + ATP = thiamine diphosphate + AMP + H(+). Its pathway is cofactor biosynthesis; thiamine diphosphate biosynthesis; thiamine diphosphate from thiamine: step 1/1. Its function is as follows. Catalyzes the phosphorylation of thiamine to thiamine pyrophosphate (TPP). TPP is an active cofactor for enzymes involved in glycolysis and energy production. Plant leaves require high levels of TPP for photosynthesis and carbohydrate metabolism. The polypeptide is Thiamine pyrophosphokinase 3 (TPK3) (Oryza sativa subsp. japonica (Rice)).